Consider the following 205-residue polypeptide: MDLTVINDRGEQVASVAASDETFGRDYNEALVHQVVTAFQANARSGNRAQQTRAEVSASTHKPWRQKGTGRARSGRASSPIWRGGGVTFPNKPNENFTHKVNRKMYRAGLAAILSQLAREGKLKVVESLGIESPKTKLLAGKLKSMGYGKVMIIADAIDDNLWLSSRNLPNVYVVEPHQADPWSLVKFGNVLITKAAIKQFEEMV.

Positions 43-60 (ARSGNRAQQTRAEVSAST) are enriched in polar residues. The segment at 43 to 96 (ARSGNRAQQTRAEVSASTHKPWRQKGTGRARSGRASSPIWRGGGVTFPNKPNEN) is disordered. Over residues 62–74 (KPWRQKGTGRARS) the composition is skewed to basic residues.

The protein belongs to the universal ribosomal protein uL4 family. Part of the 50S ribosomal subunit.

One of the primary rRNA binding proteins, this protein initially binds near the 5'-end of the 23S rRNA. It is important during the early stages of 50S assembly. It makes multiple contacts with different domains of the 23S rRNA in the assembled 50S subunit and ribosome. In terms of biological role, forms part of the polypeptide exit tunnel. The polypeptide is Large ribosomal subunit protein uL4 (Thiobacillus denitrificans (strain ATCC 25259 / T1)).